Consider the following 156-residue polypeptide: RNA polymerase sigma factor SigS (156 aa).

The Polymerase core binding signature appears at 29 to 44; that stretch reads EYYQLLLIKMWQLSQI. Residues 126-145 constitute a DNA-binding region (H-T-H motif); that stretch reads QFEIAEIMSLSLSTIKLIKM.

It belongs to the sigma-70 factor family.

Functionally, sigma factors are initiation factors that promote the attachment of RNA polymerase to specific initiation sites and are then released. Sigma-S contributes to the protection against external stress, thus playing a role in cellular fitness and survival. This is RNA polymerase sigma factor SigS (sigS) from Staphylococcus aureus (strain COL).